A 377-amino-acid chain; its full sequence is Queuine tRNA-ribosyltransferase (377 aa).

The Proton acceptor role is filled by Asp-93. Substrate contacts are provided by residues 93–97 (DSGGF), Asp-147, Gln-191, and Gly-218. The tract at residues 249–255 (GVGTPLD) is RNA binding. Asp-268 acts as the Nucleophile in catalysis. The tract at residues 273 to 277 (TRNAR) is RNA binding; important for wobble base 34 recognition. Cys-306, Cys-308, Cys-311, and His-337 together coordinate Zn(2+).

The protein belongs to the queuine tRNA-ribosyltransferase family. As to quaternary structure, homodimer. Within each dimer, one monomer is responsible for RNA recognition and catalysis, while the other monomer binds to the replacement base PreQ1. The cofactor is Zn(2+).

The enzyme catalyses 7-aminomethyl-7-carbaguanine + guanosine(34) in tRNA = 7-aminomethyl-7-carbaguanosine(34) in tRNA + guanine. It functions in the pathway tRNA modification; tRNA-queuosine biosynthesis. Its function is as follows. Catalyzes the base-exchange of a guanine (G) residue with the queuine precursor 7-aminomethyl-7-deazaguanine (PreQ1) at position 34 (anticodon wobble position) in tRNAs with GU(N) anticodons (tRNA-Asp, -Asn, -His and -Tyr). Catalysis occurs through a double-displacement mechanism. The nucleophile active site attacks the C1' of nucleotide 34 to detach the guanine base from the RNA, forming a covalent enzyme-RNA intermediate. The proton acceptor active site deprotonates the incoming PreQ1, allowing a nucleophilic attack on the C1' of the ribose to form the product. After dissociation, two additional enzymatic reactions on the tRNA convert PreQ1 to queuine (Q), resulting in the hypermodified nucleoside queuosine (7-(((4,5-cis-dihydroxy-2-cyclopenten-1-yl)amino)methyl)-7-deazaguanosine). This is Queuine tRNA-ribosyltransferase from Oleidesulfovibrio alaskensis (strain ATCC BAA-1058 / DSM 17464 / G20) (Desulfovibrio alaskensis).